A 357-amino-acid polypeptide reads, in one-letter code: Tetraacyldisaccharide 4'-kinase (357 aa).

Residue 49–56 coordinates ATP; it reads TIGGTGKT.

The protein belongs to the LpxK family.

It catalyses the reaction a lipid A disaccharide + ATP = a lipid IVA + ADP + H(+). It functions in the pathway glycolipid biosynthesis; lipid IV(A) biosynthesis; lipid IV(A) from (3R)-3-hydroxytetradecanoyl-[acyl-carrier-protein] and UDP-N-acetyl-alpha-D-glucosamine: step 6/6. In terms of biological role, transfers the gamma-phosphate of ATP to the 4'-position of a tetraacyldisaccharide 1-phosphate intermediate (termed DS-1-P) to form tetraacyldisaccharide 1,4'-bis-phosphate (lipid IVA). This Porphyromonas gingivalis (strain ATCC BAA-308 / W83) protein is Tetraacyldisaccharide 4'-kinase.